A 121-amino-acid chain; its full sequence is Large ribosomal subunit protein uL18 (121 aa).

A disordered region spans residues Met-1 to Leu-25. The segment covering Ile-13–Gly-23 has biased composition (basic residues).

This sequence belongs to the universal ribosomal protein uL18 family. As to quaternary structure, part of the 50S ribosomal subunit; part of the 5S rRNA/L5/L18/L25 subcomplex. Contacts the 5S and 23S rRNAs.

This is one of the proteins that bind and probably mediate the attachment of the 5S RNA into the large ribosomal subunit, where it forms part of the central protuberance. In Streptococcus pyogenes serotype M28 (strain MGAS6180), this protein is Large ribosomal subunit protein uL18.